Consider the following 354-residue polypeptide: Guanine nucleotide-binding protein G(o) subunit alpha (354 aa).

Residue Gly2 is the site of N-myristoyl glycine attachment. Cys3 is lipidated: S-palmitoyl cysteine. Residues Lys32–Tyr354 enclose the G-alpha domain. Residues Lys35 to Thr48 are G1 motif. GTP is bound by residues Glu43, Lys46, Ser47, Thr48, Ser152, Leu176, Arg177, Thr178, and Arg179. Ser47 serves as a coordination point for Mg(2+). The interval Asp174–Thr182 is G2 motif. Position 182 (Thr182) interacts with Mg(2+). The segment at Phe197–Arg206 is G3 motif. Gln205 is subject to 5-glutamyl histamine. Residues Ile266–Asp273 are G4 motif. GTP is bound by residues Asn270, Asp273, and Cys325. Positions Thr324–Thr329 are G5 motif. Cys351 carries the S-palmitoyl cysteine lipid modification.

It belongs to the G-alpha family. G(i/o/t/z) subfamily. G proteins are composed of 3 units; alpha, beta and gamma. The alpha chain contains the guanine nucleotide binding site. Forms a complex with GNB1 and GNG3. Interacts with RGS14. Interacts with RGS16. Interacts with RGS19. Interacts (when palmitoylated) with ADGRG3. In terms of processing, histaminylated at Gln-205 residues by TGM2.

The protein localises to the cell membrane. It is found in the membrane. It carries out the reaction GTP + H2O = GDP + phosphate + H(+). The GTPase activity is promoted by GTPAse activators, such as RGS14, RGS16 and RGS19. Functionally, guanine nucleotide-binding proteins (G proteins) function as transducers downstream of G protein-coupled receptors (GPCRs) in numerous signaling cascades. The alpha chain contains the guanine nucleotide binding site and alternates between an active, GTP-bound state and an inactive, GDP-bound state. Signaling by an activated GPCR promotes GDP release and GTP binding. The alpha subunit has a low GTPase activity that converts bound GTP to GDP, thereby terminating the signal. Both GDP release and GTP hydrolysis are modulated by numerous regulatory proteins. Signaling is mediated via effector proteins, such as adenylate cyclase. Inhibits adenylate cyclase activity, leading to decreased intracellular cAMP levels. In Bos taurus (Bovine), this protein is Guanine nucleotide-binding protein G(o) subunit alpha (GNAO1).